A 705-amino-acid polypeptide reads, in one-letter code: Protein arginine N-methyltransferase 7 (705 aa).

2 SAM-dependent MTase PRMT-type domains span residues 29–372 and 381–705; these read QNSW…YSLW and TKSV…QKKL.

The protein belongs to the class I-like SAM-binding methyltransferase superfamily. Protein arginine N-methyltransferase family. PRMT7 subfamily.

Essential arginine methyltransferase that can both catalyze the formation of omega-N monomethylarginine (MMA) and symmetrical dimethylarginine (sDMA). Specifically mediates the symmetrical dimethylation of arginine residues in the small nuclear ribonucleoproteins SmD1 and SmD3. This is Protein arginine N-methyltransferase 7 (Art7) from Drosophila simulans (Fruit fly).